The chain runs to 426 residues: Glutamate-1-semialdehyde 2,1-aminomutase (426 aa).

At lysine 265 the chain carries N6-(pyridoxal phosphate)lysine.

Belongs to the class-III pyridoxal-phosphate-dependent aminotransferase family. HemL subfamily. As to quaternary structure, homodimer. Pyridoxal 5'-phosphate serves as cofactor.

It is found in the cytoplasm. The catalysed reaction is (S)-4-amino-5-oxopentanoate = 5-aminolevulinate. It participates in porphyrin-containing compound metabolism; protoporphyrin-IX biosynthesis; 5-aminolevulinate from L-glutamyl-tRNA(Glu): step 2/2. The sequence is that of Glutamate-1-semialdehyde 2,1-aminomutase from Yersinia pestis bv. Antiqua (strain Antiqua).